We begin with the raw amino-acid sequence, 278 residues long: GTPase Era (278 aa).

Residues 7–168 (YCGYIAIVGK…ENLIYPYLPN (162 aa)) enclose the Era-type G domain. The segment at 15–22 (GKPNVGKS) is G1. Residue 15-22 (GKPNVGKS) participates in GTP binding. The G2 stretch occupies residues 41-45 (NTTQK). The G3 stretch occupies residues 62–65 (DTPG). Residues 62 to 66 (DTPGI) and 117 to 120 (NKID) contribute to the GTP site. A G4 region spans residues 117–120 (NKID). The G5 stretch occupies residues 147 to 149 (ISA). The 78-residue stretch at 199–276 (LRDELPSIIT…YLIIWVKVKI (78 aa)) folds into the KH type-2 domain.

The protein belongs to the TRAFAC class TrmE-Era-EngA-EngB-Septin-like GTPase superfamily. Era GTPase family. In terms of assembly, monomer.

Its subcellular location is the cytoplasm. It localises to the cell membrane. Its function is as follows. An essential GTPase that binds both GDP and GTP, with rapid nucleotide exchange. Plays a role in 16S rRNA processing and 30S ribosomal subunit biogenesis and possibly also in cell cycle regulation and energy metabolism. The polypeptide is GTPase Era (Buchnera aphidicola subsp. Schizaphis graminum (strain Sg)).